The chain runs to 218 residues: Small ribosomal subunit protein uS3c (218 aa).

Positions 47-118 (VQKNMRTSSG…KLNIAVTRIA (72 aa)) constitute a KH type-2 domain.

The protein belongs to the universal ribosomal protein uS3 family. In terms of assembly, part of the 30S ribosomal subunit.

Its subcellular location is the plastid. The protein localises to the chloroplast. This Solanum bulbocastanum (Wild potato) protein is Small ribosomal subunit protein uS3c (rps3).